Here is a 607-residue protein sequence, read N- to C-terminus: MHYRPSPTRIIPRCSNMEILREKLSLLPDKPGVYLMKDASGQIIYVGKAKVLKNRVRSYFTGSHNGKTQLMISLIADFETIITDSEVEALLLECNLIKKHNPKYNILLRDDKTYPFITITDEAHPRILVTRQVKKGAGKYYGPYPNATAAKEAARLLNRLFPFRKCRQIPNKPCLYYHLGQCLGPCQVDVPKEAYDKIRKEAAAFLKGDQGAILKALEKKMKEASENLEFERAKEYRDLMEDLKKVGEKQNITLNDFVDRDVVGYAYTQDQLCIQIFYLRQGKLLSRDNFIFPYYEEPEEAFVSFLAQFYTESSALPQEILLPPLDISVLTKLFPMVVPQKGQKRDLVQMAMENAQTTLHEQISIEIRNLTECTQALAEIGNALGIPSLRTIESFDISNIAGTHSVAGMIQFLDGKPNRSQYRKFKIQPMPNMDDTASMHQVIERRYARLQQENLPLPDLILVDGGKGQIHAALAALHSLNAAIPVAGMVKNDKHQTSALIDAMDRIHSLDRRSAGFRLLERIQNEVHRFAITFHRQQRAKSMTLSELDGIAGVGPKRRQQLLKFFKSIDSIRQATLEELQQSGLPAPAAAAVYQHFNSHKEENHDS.

Residues 29-106 enclose the GIY-YIG domain; that stretch reads DKPGVYLMKD…IKKHNPKYNI (78 aa). A UVR domain is found at 211-246; the sequence is GAILKALEKKMKEASENLEFERAKEYRDLMEDLKKV.

Belongs to the UvrC family. As to quaternary structure, interacts with UvrB in an incision complex.

The protein resides in the cytoplasm. In terms of biological role, the UvrABC repair system catalyzes the recognition and processing of DNA lesions. UvrC both incises the 5' and 3' sides of the lesion. The N-terminal half is responsible for the 3' incision and the C-terminal half is responsible for the 5' incision. The chain is UvrABC system protein C from Desulfitobacterium hafniense (strain Y51).